The chain runs to 423 residues: Glutamate-1-semialdehyde 2,1-aminomutase (423 aa).

An N6-(pyridoxal phosphate)lysine modification is found at Lys262.

This sequence belongs to the class-III pyridoxal-phosphate-dependent aminotransferase family. HemL subfamily. In terms of assembly, homodimer. The cofactor is pyridoxal 5'-phosphate.

Its subcellular location is the cytoplasm. It catalyses the reaction (S)-4-amino-5-oxopentanoate = 5-aminolevulinate. It functions in the pathway porphyrin-containing compound metabolism; protoporphyrin-IX biosynthesis; 5-aminolevulinate from L-glutamyl-tRNA(Glu): step 2/2. This is Glutamate-1-semialdehyde 2,1-aminomutase from Campylobacter fetus subsp. fetus (strain 82-40).